Consider the following 583-residue polypeptide: Probable GTP diphosphokinase CRSH, chloroplastic (583 aa).

A chloroplast-targeting transit peptide spans 1 to 58 (MSVIRPSPIPIPRCRSQVLHRRLYSIQLIQRRRRRWNPRSEVEDTAIESTARSPEAAG). In terms of domain architecture, HD spans 112 to 212 (PLSKALSLSI…MDLVSKLDEM (101 aa)). EF-hand domains follow at residues 470–505 (TTTN…LGAP) and 507–539 (EDAE…VEFM). 10 residues coordinate Ca(2+): Asp-483, Asn-485, Asp-487, Met-489, Glu-494, Asp-517, Asn-519, Asp-521, Ser-523, and Glu-528.

This sequence belongs to the RelA/SpoT family. Expressed in shoots, cotyledons, rosette and cauline leaves, stems, sepals, pistils and siliques.

It is found in the plastid. Its subcellular location is the chloroplast. It carries out the reaction GTP + ATP = guanosine 3'-diphosphate 5'-triphosphate + AMP. With respect to regulation, activated by calcium. In terms of biological role, possesses calcium-dependent ppGpp (guanosine 3'-diphosphate 5'-diphosphate) synthetase activity in vitro and is able to functionally complement E.coli relA mutants. Plays an important role in the timing adjustment of pistil and pollen maturation required for successful pollination. May be involved in a rapid plant ppGpp-mediated response to pathogens and other stresses. This chain is Probable GTP diphosphokinase CRSH, chloroplastic (CRSH), found in Arabidopsis thaliana (Mouse-ear cress).